A 224-amino-acid polypeptide reads, in one-letter code: Urease accessory protein UreF (224 aa).

Belongs to the UreF family. In terms of assembly, ureD, UreF and UreG form a complex that acts as a GTP-hydrolysis-dependent molecular chaperone, activating the urease apoprotein by helping to assemble the nickel containing metallocenter of UreC. The UreE protein probably delivers the nickel.

The protein resides in the cytoplasm. In terms of biological role, required for maturation of urease via the functional incorporation of the urease nickel metallocenter. The chain is Urease accessory protein UreF from Pseudomonas entomophila (strain L48).